Reading from the N-terminus, the 562-residue chain is Potassium-transporting ATPase potassium-binding subunit (562 aa).

The next 12 membrane-spanning stretches (helical) occupy residues 6–26 (FLLIASFMVVLFVLSRPLGGF), 63–83 (ALAILCFNLLGIVLLFVLLMA), 132–152 (GLTVQNFLSAATGIAVAFALI), 175–195 (LYVLLPIALIIALIFVSQGVL), 253–273 (FVQMLAIFLIPCALCFAFGQV), 283–303 (LIWAMSLIFIVAVVVVMYAEL), 327–347 (FGILATSLYAVVTTAASCGAV), 356–376 (ALGGMIPLWLMQIGEVVFGGV), 379–399 (GLYGMLLFVLLTVFIAGLMIG), 416–436 (MTALAILVTPTIVLLGTALAL), 483–503 (LLLAAAMFIGRFGVILPVLAI), and 526–546 (LFIGLLIGTVLLVGALTFIPA).

It belongs to the KdpA family. In terms of assembly, the system is composed of three essential subunits: KdpA, KdpB and KdpC.

Its subcellular location is the cell inner membrane. In terms of biological role, part of the high-affinity ATP-driven potassium transport (or Kdp) system, which catalyzes the hydrolysis of ATP coupled with the electrogenic transport of potassium into the cytoplasm. This subunit binds the periplasmic potassium ions and delivers the ions to the membrane domain of KdpB through an intramembrane tunnel. This is Potassium-transporting ATPase potassium-binding subunit from Yersinia pseudotuberculosis serotype O:1b (strain IP 31758).